The primary structure comprises 828 residues: DNA gyrase subunit A (828 aa).

The region spanning 38–501 (LPDARDGLKP…SYESIDTEDL (464 aa)) is the Topo IIA-type catalytic domain. Catalysis depends on Tyr-126, which acts as the O-(5'-phospho-DNA)-tyrosine intermediate. Positions 528–534 (QNRGGKG) match the GyrA-box motif.

The protein belongs to the type II topoisomerase GyrA/ParC subunit family. Heterotetramer, composed of two GyrA and two GyrB chains. In the heterotetramer, GyrA contains the active site tyrosine that forms a transient covalent intermediate with DNA, while GyrB binds cofactors and catalyzes ATP hydrolysis.

It localises to the cytoplasm. It carries out the reaction ATP-dependent breakage, passage and rejoining of double-stranded DNA.. A type II topoisomerase that negatively supercoils closed circular double-stranded (ds) DNA in an ATP-dependent manner to modulate DNA topology and maintain chromosomes in an underwound state. Negative supercoiling favors strand separation, and DNA replication, transcription, recombination and repair, all of which involve strand separation. Also able to catalyze the interconversion of other topological isomers of dsDNA rings, including catenanes and knotted rings. Type II topoisomerases break and join 2 DNA strands simultaneously in an ATP-dependent manner. This Helicobacter pylori (strain J99 / ATCC 700824) (Campylobacter pylori J99) protein is DNA gyrase subunit A.